Reading from the N-terminus, the 189-residue chain is 3-hydroxyanthranilate 3,4-dioxygenase (189 aa).

R46 contributes to the O2 binding site. Fe cation is bound by residues H50, E56, and H94. E56 is a substrate binding site. 2 residues coordinate substrate: R98 and E109. The Fe cation site is built by C124, C127, C161, and C164.

Belongs to the 3-HAO family. In terms of assembly, homodimer. Requires Fe(2+) as cofactor.

It carries out the reaction 3-hydroxyanthranilate + O2 = (2Z,4Z)-2-amino-3-carboxymuconate 6-semialdehyde. The protein operates within cofactor biosynthesis; NAD(+) biosynthesis; quinolinate from L-kynurenine: step 3/3. Its function is as follows. Catalyzes the oxidative ring opening of 3-hydroxyanthranilate to 2-amino-3-carboxymuconate semialdehyde, which spontaneously cyclizes to quinolinate. The chain is 3-hydroxyanthranilate 3,4-dioxygenase from Shewanella woodyi (strain ATCC 51908 / MS32).